We begin with the raw amino-acid sequence, 176 residues long: ATP-dependent protease subunit HslV (176 aa).

The active site involves T5. Na(+)-binding residues include A161, C164, and T167.

The protein belongs to the peptidase T1B family. HslV subfamily. A double ring-shaped homohexamer of HslV is capped on each side by a ring-shaped HslU homohexamer. The assembly of the HslU/HslV complex is dependent on binding of ATP.

The protein resides in the cytoplasm. The enzyme catalyses ATP-dependent cleavage of peptide bonds with broad specificity.. With respect to regulation, allosterically activated by HslU binding. In terms of biological role, protease subunit of a proteasome-like degradation complex believed to be a general protein degrading machinery. The protein is ATP-dependent protease subunit HslV of Pelotomaculum thermopropionicum (strain DSM 13744 / JCM 10971 / SI).